Reading from the N-terminus, the 204-residue chain is Protein PAXX (204 aa).

A PISA domain is found at Phe-37 to Ala-79. At Ser-134 the chain carries Phosphoserine. The disordered stretch occupies residues Glu-143 to Thr-204. Phosphothreonine is present on Thr-145. Residues Ser-148 and Ser-152 each carry the phosphoserine modification. Residues Gly-171–Thr-204 form a mediates interaction with XRCC5/Ku80 and XRCC6/Ku70 and association with the non-homologous end joining core complex region. Positions Phe-190–Thr-204 match the XLM motif.

The protein belongs to the XRCC4-XLF family. PAXX subfamily. As to quaternary structure, homodimer. Interacts with the DNA-bound XRCC5/Ku80 and XRCC6/Ku70 heterodimer (Ku complex); the interaction is direct. Associated component of the non-homologous end joining (NHEJ) complex, composed of the core proteins PRKDC, LIG4, XRCC4, XRCC6/Ku70, XRCC5/Ku86 and NHEJ1/XLF. Interacts with POLL (DNA polymerase lambda); promoting POLL recruitment to double-strand breaks (DSBs) and stimulation of the end-filling activity of POLL. Phosphorylation may inhibit interaction with the DNA-bound XRCC5/Ku80 and XRCC6/Ku70 heterodimer (Ku complex).

It localises to the nucleus. The protein localises to the chromosome. The protein resides in the cytoplasm. In terms of biological role, non-essential DNA repair protein involved in DNA non-homologous end joining (NHEJ); participates in double-strand break (DSB) repair and V(D)J recombination. May act as a scaffold required for accumulation of the Ku heterodimer, composed of XRCC5/Ku80 and XRCC6/Ku70, at double-strand break sites and promote the assembly and/or stability of the NHEJ machinery. Involved in NHEJ by promoting the ligation of blunt-ended DNA ends. Together with NHEJ1/XLF, collaborates with DNA polymerase lambda (POLL) to promote joining of non-cohesive DNA ends. Constitutes a non-essential component of classical NHEJ: has a complementary but distinct function with NHEJ1/XLF in DNA repair. Able to restrict infection by herpesvirus 1 (HSV-1) via an unknown mechanism. This chain is Protein PAXX, found in Homo sapiens (Human).